The chain runs to 196 residues: MRNASCKRVTGETDISMELNLDGTGCAAVATGHAFFDHMLDLLARHSLMDLTLQARGDLEVDAHHTVEDVGIVLGECIKNALGDKKGIVRYGCSYLPMDETLTRVVMDLSNRPYVAFRIPEGGLPDAPNFPLTLCEEFCRALANNLRCNLHVEVLYGRDGHHIAESVFKGIAHALRQAAAIDPRAAGTLPSTKGML.

It belongs to the imidazoleglycerol-phosphate dehydratase family.

It localises to the cytoplasm. The enzyme catalyses D-erythro-1-(imidazol-4-yl)glycerol 3-phosphate = 3-(imidazol-4-yl)-2-oxopropyl phosphate + H2O. It functions in the pathway amino-acid biosynthesis; L-histidine biosynthesis; L-histidine from 5-phospho-alpha-D-ribose 1-diphosphate: step 6/9. In Akkermansia muciniphila (strain ATCC BAA-835 / DSM 22959 / JCM 33894 / BCRC 81048 / CCUG 64013 / CIP 107961 / Muc), this protein is Imidazoleglycerol-phosphate dehydratase.